Consider the following 121-residue polypeptide: Flagellar protein FliT (121 aa).

Residues 1-50 form a required for homodimerization region; sequence MNNAPHLYFAWQQLVEKSQLMLRLATEEQWDELIASEMAYVNAVQEIAHL. Residues 60 to 98 form a fliD binding region; sequence MQEQLRPMLLLILDNESKVKQLLQIRMDELAKLVGQSSV.

It belongs to the FliT family. Homodimer. Interacts with FliD and FlhC.

The protein localises to the cytoplasm. It is found in the cytosol. In terms of biological role, dual-function protein that regulates the transcription of class 2 flagellar operons and that also acts as an export chaperone for the filament-capping protein FliD. As a transcriptional regulator, acts as an anti-FlhDC factor; it directly binds FlhC, thus inhibiting the binding of the FlhC/FlhD complex to class 2 promoters, resulting in decreased expression of class 2 flagellar operons. As a chaperone, effects FliD transition to the membrane by preventing its premature polymerization, and by directing it to the export apparatus. In Escherichia coli O6:K15:H31 (strain 536 / UPEC), this protein is Flagellar protein FliT.